The primary structure comprises 184 residues: ATP synthase subunit b, chloroplastic (184 aa).

A helical transmembrane segment spans residues 31–49 (IINPSVVLSVLIYFGKGVL).

The protein belongs to the ATPase B chain family. In terms of assembly, F-type ATPases have 2 components, F(1) - the catalytic core - and F(0) - the membrane proton channel. F(1) has five subunits: alpha(3), beta(3), gamma(1), delta(1), epsilon(1). F(0) has four main subunits: a(1), b(1), b'(1) and c(10-14). The alpha and beta chains form an alternating ring which encloses part of the gamma chain. F(1) is attached to F(0) by a central stalk formed by the gamma and epsilon chains, while a peripheral stalk is formed by the delta, b and b' chains.

It is found in the plastid. It localises to the chloroplast thylakoid membrane. Functionally, f(1)F(0) ATP synthase produces ATP from ADP in the presence of a proton or sodium gradient. F-type ATPases consist of two structural domains, F(1) containing the extramembraneous catalytic core and F(0) containing the membrane proton channel, linked together by a central stalk and a peripheral stalk. During catalysis, ATP synthesis in the catalytic domain of F(1) is coupled via a rotary mechanism of the central stalk subunits to proton translocation. In terms of biological role, component of the F(0) channel, it forms part of the peripheral stalk, linking F(1) to F(0). The sequence is that of ATP synthase subunit b, chloroplastic from Pinus koraiensis (Korean pine).